Consider the following 162-residue polypeptide: Anaerobic nitrite reductase GLB1 (162 aa).

The Globin domain occupies 9 to 159; sequence VFSEEKEALV…LVAAIKQEMK (151 aa). The short motif at 42–46 is the Homodimerization element; sequence EIAPS. Heme b is bound by residues lysine 66, histidine 70, arginine 100, threonine 104, and histidine 105. The short motif at 112–124 is the Homodimerization element; it reads DGHFEVTRFALLE.

Belongs to the plant globin family. Homodimer. It depends on heme b as a cofactor. Seeds and roots.

Its subcellular location is the cytoplasm. It is found in the nucleus. It catalyses the reaction Fe(III)-heme b-[protein] + nitric oxide + H2O = Fe(II)-heme b-[protein] + nitrite + 2 H(+). Functionally, phytoglobin that reduces nitrite to nitric oxide (NO) under anoxic conditions (e.g. during flooding or in waterlogged soil). May not function as an oxygen storage or transport protein. Has an unusually high affinity for O(2) through an hexacoordinate heme iron because of a very low dissociation constant. The protein is Anaerobic nitrite reductase GLB1 of Hordeum vulgare (Barley).